Consider the following 455-residue polypeptide: ATP-dependent protease ATPase subunit HslU (455 aa).

Residues I19 and 61-66 (GVGKTE) each bind ATP. Positions 144-163 (ESKVGFANEPAEDAASKKEK) are disordered. D268, E333, and R405 together coordinate ATP.

The protein belongs to the ClpX chaperone family. HslU subfamily. A double ring-shaped homohexamer of HslV is capped on each side by a ring-shaped HslU homohexamer. The assembly of the HslU/HslV complex is dependent on binding of ATP.

The protein localises to the cytoplasm. Its function is as follows. ATPase subunit of a proteasome-like degradation complex; this subunit has chaperone activity. The binding of ATP and its subsequent hydrolysis by HslU are essential for unfolding of protein substrates subsequently hydrolyzed by HslV. HslU recognizes the N-terminal part of its protein substrates and unfolds these before they are guided to HslV for hydrolysis. In Francisella tularensis subsp. holarctica (strain FTNF002-00 / FTA), this protein is ATP-dependent protease ATPase subunit HslU.